A 406-amino-acid chain; its full sequence is Tryptophan 2,3-dioxygenase (406 aa).

A Phosphoserine modification is found at Ser-19. Substrate contacts are provided by residues 72–76 (FIITH) and Arg-144. His-328 is a binding site for heme. Substrate is bound at residue Thr-342.

This sequence belongs to the tryptophan 2,3-dioxygenase family. As to quaternary structure, homotetramer. Dimer of dimers. Heme serves as cofactor. Liver.

It catalyses the reaction L-tryptophan + O2 = N-formyl-L-kynurenine. It participates in amino-acid degradation; L-tryptophan degradation via kynurenine pathway; L-kynurenine from L-tryptophan: step 1/2. Its function is as follows. Heme-dependent dioxygenase that catalyzes the oxidative cleavage of the L-tryptophan (L-Trp) pyrrole ring and converts L-tryptophan to N-formyl-L-kynurenine. Catalyzes the oxidative cleavage of the indole moiety. This chain is Tryptophan 2,3-dioxygenase, found in Rattus norvegicus (Rat).